Here is a 533-residue protein sequence, read N- to C-terminus: GMP synthase [glutamine-hydrolyzing] (533 aa).

Positions 25-215 (SIVIFDFGSQ…VFNICKCHAN (191 aa)) constitute a Glutamine amidotransferase type-1 domain. Residue C102 is the Nucleophile of the active site. Active-site residues include H189 and E191. Positions 216 to 408 (WTMGNYIQES…LGLPDEMIWR (193 aa)) constitute a GMPS ATP-PPase domain. ATP is bound at residue 243–249 (SGGVDSA).

As to quaternary structure, homodimer.

The catalysed reaction is XMP + L-glutamine + ATP + H2O = GMP + L-glutamate + AMP + diphosphate + 2 H(+). It participates in purine metabolism; GMP biosynthesis; GMP from XMP (L-Gln route): step 1/1. Catalyzes the synthesis of GMP from XMP. This chain is GMP synthase [glutamine-hydrolyzing], found in Dehalococcoides mccartyi (strain ATCC BAA-2266 / KCTC 15142 / 195) (Dehalococcoides ethenogenes (strain 195)).